Reading from the N-terminus, the 351-residue chain is S-adenosylmethionine:tRNA ribosyltransferase-isomerase (351 aa).

It belongs to the QueA family. As to quaternary structure, monomer.

Its subcellular location is the cytoplasm. It carries out the reaction 7-aminomethyl-7-carbaguanosine(34) in tRNA + S-adenosyl-L-methionine = epoxyqueuosine(34) in tRNA + adenine + L-methionine + 2 H(+). The protein operates within tRNA modification; tRNA-queuosine biosynthesis. Its function is as follows. Transfers and isomerizes the ribose moiety from AdoMet to the 7-aminomethyl group of 7-deazaguanine (preQ1-tRNA) to give epoxyqueuosine (oQ-tRNA). The polypeptide is S-adenosylmethionine:tRNA ribosyltransferase-isomerase (Phocaeicola vulgatus (strain ATCC 8482 / DSM 1447 / JCM 5826 / CCUG 4940 / NBRC 14291 / NCTC 11154) (Bacteroides vulgatus)).